We begin with the raw amino-acid sequence, 165 residues long: Ubiquitin-like protein 4B (165 aa).

The Ubiquitin-like domain occupies 1–76 (MFLTVKLLLG…ISVVVRPLEK (76 aa)). The segment at 139–165 (EPLAQPTGEREPEVLSPNKEEEKEAVQ) is disordered. The span at 146–165 (GEREPEVLSPNKEEEKEAVQ) shows a compositional bias: basic and acidic residues.

The protein localises to the cytoplasm. The polypeptide is Ubiquitin-like protein 4B (UBL4B) (Bos taurus (Bovine)).